Reading from the N-terminus, the 149-residue chain is Large ribosomal subunit protein bL9 (149 aa).

This sequence belongs to the bacterial ribosomal protein bL9 family.

Functionally, binds to the 23S rRNA. In Helicobacter acinonychis (strain Sheeba), this protein is Large ribosomal subunit protein bL9.